The primary structure comprises 62 residues: UPF0291 protein CLK_1994 (62 aa).

This sequence belongs to the UPF0291 family.

The protein resides in the cytoplasm. The polypeptide is UPF0291 protein CLK_1994 (Clostridium botulinum (strain Loch Maree / Type A3)).